Consider the following 269-residue polypeptide: Ribosomal RNA small subunit methyltransferase A (269 aa).

Residues Asn11, Leu13, Gly37, Glu57, Asp85, and Asn104 each contribute to the S-adenosyl-L-methionine site.

This sequence belongs to the class I-like SAM-binding methyltransferase superfamily. rRNA adenine N(6)-methyltransferase family. RsmA subfamily.

The protein resides in the cytoplasm. The enzyme catalyses adenosine(1518)/adenosine(1519) in 16S rRNA + 4 S-adenosyl-L-methionine = N(6)-dimethyladenosine(1518)/N(6)-dimethyladenosine(1519) in 16S rRNA + 4 S-adenosyl-L-homocysteine + 4 H(+). Specifically dimethylates two adjacent adenosines (A1518 and A1519) in the loop of a conserved hairpin near the 3'-end of 16S rRNA in the 30S particle. May play a critical role in biogenesis of 30S subunits. The polypeptide is Ribosomal RNA small subunit methyltransferase A (Campylobacter hominis (strain ATCC BAA-381 / DSM 21671 / CCUG 45161 / LMG 19568 / NCTC 13146 / CH001A)).